Here is a 337-residue protein sequence, read N- to C-terminus: Tryptophan--tRNA ligase (337 aa).

Residues 11-13 (QPT) and 19-20 (GN) contribute to the ATP site. Positions 12 to 20 (PTGALHLGN) match the 'HIGH' region motif. Aspartate 135 lines the L-tryptophan pocket. ATP-binding positions include 147–149 (GED), valine 191, and 200–204 (KMSKS). Residues 200-204 (KMSKS) carry the 'KMSKS' region motif.

The protein belongs to the class-I aminoacyl-tRNA synthetase family. In terms of assembly, homodimer.

The protein localises to the cytoplasm. It catalyses the reaction tRNA(Trp) + L-tryptophan + ATP = L-tryptophyl-tRNA(Trp) + AMP + diphosphate + H(+). In terms of biological role, catalyzes the attachment of tryptophan to tRNA(Trp). The sequence is that of Tryptophan--tRNA ligase from Prochlorococcus marinus (strain MIT 9313).